The following is a 532-amino-acid chain: Cytochrome c oxidase subunit 1 (532 aa).

3 helical membrane-spanning segments follow: residues 1-21 (MWDY…AYAA), 27-47 (LPYM…LIWV), and 69-89 (GVIA…VIAF). Residue H114 participates in heme b binding. Transmembrane regions (helical) follow at residues 115–135 (TSAV…FYVV), 143–163 (LFGG…IIVT), 185–205 (LDIL…GTIF), 212–232 (IYVA…LHIV), 263–283 (GHNA…YYFV), 296–316 (LSIV…PHHL), 328–348 (LGMV…INGL), and 366–386 (MMVV…MMSI). Residues H264, H314, and H315 each coordinate Cu cation. Residues H402 and H404 each coordinate heme b. Transmembrane regions (helical) follow at residues 403-423 (VHSG…YFLT), 442-462 (FWLA…TGIM), and 496-516 (VGGV…WATV).

The protein belongs to the heme-copper respiratory oxidase family. Requires Cu(2+) as cofactor. The cofactor is heme b.

Its subcellular location is the cell membrane. The catalysed reaction is 4 Fe(II)-[cytochrome c] + O2 + 8 H(+)(in) = 4 Fe(III)-[cytochrome c] + 2 H2O + 4 H(+)(out). It participates in energy metabolism; oxidative phosphorylation. Cytochrome c oxidase is the component of the respiratory chain that catalyzes the reduction of oxygen to water. Subunits 1-3 form the functional core of the enzyme complex. Co I is the catalytic subunit of the enzyme. Electrons originating in cytochrome c are transferred via the copper A center of subunit 2 and heme a of subunit 1 to the bimetallic center formed by heme a3 and copper B. This cytochrome c oxidase shows proton pump activity across the membrane in addition to the electron transfer. The protein is Cytochrome c oxidase subunit 1 (ctaD) of Rhodobacter capsulatus (Rhodopseudomonas capsulata).